The chain runs to 701 residues: Low-density lipoprotein receptor-related protein 12 (701 aa).

Over 1–334 (GKSEEPNCAC…ENCPVIVPTR (334 aa)) the chain is Extracellular. LDL-receptor class A domains lie at 7–43 (NCAC…EICA) and 56–97 (PCAY…IDCD). 7 cysteine pairs are disulfide-bonded: Cys-8/Cys-20, Cys-15/Cys-33, Cys-27/Cys-42, Cys-57/Cys-74, Cys-64/Cys-87, Cys-81/Cys-96, and Cys-101/Cys-127. In terms of domain architecture, CUB spans 101–214 (CGQWLKYFYG…RGFNATYQVD (114 aa)). Residues Asn-126 and Asn-208 are each glycosylated (N-linked (GlcNAc...) asparagine). LDL-receptor class A domains are found at residues 216-253 (FCLP…INCT), 254-291 (MCQK…KNCF), and 292-328 (FCQP…ENCP). Intrachain disulfides connect Cys-217–Cys-230, Cys-224–Cys-243, Cys-237–Cys-252, Cys-255–Cys-268, Cys-262–Cys-281, Cys-275–Cys-290, Cys-293–Cys-305, Cys-300–Cys-318, and Cys-312–Cys-327. Asn-251 carries an N-linked (GlcNAc...) asparagine glycan. Residue Asn-283 is glycosylated (N-linked (GlcNAc...) asparagine). The helical transmembrane segment at 335-355 (VITAAVIGSLICGLLLVIALG) threads the bilayer. The Cytoplasmic segment spans residues 356-701 (CTCKLYSLRM…TSDDEALLLC (346 aa)). 4 disordered regions span residues 465–520 (ADGD…LPQK), 535–565 (ASSS…SPAR), 590–612 (SSVS…REDD), and 643–665 (DQGQ…SNRD). Composition is skewed to polar residues over residues 590 to 599 (SSVSQNQSPL) and 643 to 656 (DQGQ…SATN).

This sequence belongs to the LDLR family. As to quaternary structure, may interact with RACK1, ZFYVE9 and NMRK2.

It localises to the membrane. The protein localises to the coated pit. Probable receptor, which may be involved in the internalization of lipophilic molecules and/or signal transduction. May act as a tumor suppressor. The protein is Low-density lipoprotein receptor-related protein 12 (LRP12) of Macaca fascicularis (Crab-eating macaque).